A 392-amino-acid chain; its full sequence is GDSL esterase/lipase ESM1 (392 aa).

The N-terminal stretch at 1 to 28 is a signal peptide; sequence MADNLNLVSVLGVLLVLTIFHNPIIVYA. The active-site Nucleophile is Ser-43. N-linked (GlcNAc...) asparagine glycans are attached at residues Asn-146, Asn-166, and Asn-290. Active-site residues include Asp-324 and His-327.

This sequence belongs to the 'GDSL' lipolytic enzyme family.

It is found in the secreted. Represses or inhibits nitriles production from methionine-derived and from indol-3-ylmethyl glucosinolates. Favors isothiocyanate production. This Arabidopsis thaliana (Mouse-ear cress) protein is GDSL esterase/lipase ESM1 (ESM1).